The sequence spans 519 residues: Bifunctional purine biosynthesis protein PurH (519 aa).

One can recognise an MGS-like domain in the interval 1-145 (MQPIQRALIS…KNHASVTVVV (145 aa)).

It belongs to the PurH family.

The enzyme catalyses (6R)-10-formyltetrahydrofolate + 5-amino-1-(5-phospho-beta-D-ribosyl)imidazole-4-carboxamide = 5-formamido-1-(5-phospho-D-ribosyl)imidazole-4-carboxamide + (6S)-5,6,7,8-tetrahydrofolate. The catalysed reaction is IMP + H2O = 5-formamido-1-(5-phospho-D-ribosyl)imidazole-4-carboxamide. Its pathway is purine metabolism; IMP biosynthesis via de novo pathway; 5-formamido-1-(5-phospho-D-ribosyl)imidazole-4-carboxamide from 5-amino-1-(5-phospho-D-ribosyl)imidazole-4-carboxamide (10-formyl THF route): step 1/1. It participates in purine metabolism; IMP biosynthesis via de novo pathway; IMP from 5-formamido-1-(5-phospho-D-ribosyl)imidazole-4-carboxamide: step 1/1. This chain is Bifunctional purine biosynthesis protein PurH, found in Allochromatium vinosum (strain ATCC 17899 / DSM 180 / NBRC 103801 / NCIMB 10441 / D) (Chromatium vinosum).